The chain runs to 210 residues: Probable GTP-binding protein EngB (210 aa).

The EngB-type G domain occupies 25-199 (CGIEVAFAGR…RQKLDSWFSE (175 aa)). GTP is bound by residues 33 to 40 (GRSNAGKS), 60 to 64 (GRTQL), 78 to 81 (DLPG), 145 to 148 (TKAD), and 178 to 180 (FSS). Residues Ser40 and Thr62 each contribute to the Mg(2+) site.

It belongs to the TRAFAC class TrmE-Era-EngA-EngB-Septin-like GTPase superfamily. EngB GTPase family. The cofactor is Mg(2+).

Its function is as follows. Necessary for normal cell division and for the maintenance of normal septation. The chain is Probable GTP-binding protein EngB from Salmonella dublin (strain CT_02021853).